The primary structure comprises 154 residues: Myoglobin (154 aa).

The region spanning 2-148 (GLSDGEWQLV…FRNDIAAKYK (147 aa)) is the Globin domain. At Ser4 the chain carries Phosphoserine. His65 is a nitrite binding site. Residue His65 coordinates O2. Phosphothreonine is present on Thr68. Residue His94 participates in heme b binding.

It belongs to the globin family. As to quaternary structure, monomeric.

It localises to the cytoplasm. Its subcellular location is the sarcoplasm. It catalyses the reaction Fe(III)-heme b-[protein] + nitric oxide + H2O = Fe(II)-heme b-[protein] + nitrite + 2 H(+). The enzyme catalyses H2O2 + AH2 = A + 2 H2O. Functionally, monomeric heme protein which primary function is to store oxygen and facilitate its diffusion within muscle tissues. Reversibly binds oxygen through a pentacoordinated heme iron and enables its timely and efficient release as needed during periods of heightened demand. Depending on the oxidative conditions of tissues and cells, and in addition to its ability to bind oxygen, it also has a nitrite reductase activity whereby it regulates the production of bioactive nitric oxide. Under stress conditions, like hypoxia and anoxia, it also protects cells against reactive oxygen species thanks to its pseudoperoxidase activity. This Ondatra zibethicus (Muskrat) protein is Myoglobin (MB).